The sequence spans 247 residues: 5'-nucleotidase SurE (247 aa).

A divalent metal cation-binding residues include aspartate 8, aspartate 9, serine 39, and asparagine 91.

This sequence belongs to the SurE nucleotidase family. A divalent metal cation is required as a cofactor.

Its subcellular location is the cytoplasm. It catalyses the reaction a ribonucleoside 5'-phosphate + H2O = a ribonucleoside + phosphate. Nucleotidase that shows phosphatase activity on nucleoside 5'-monophosphates. The polypeptide is 5'-nucleotidase SurE (Pelobacter propionicus (strain DSM 2379 / NBRC 103807 / OttBd1)).